The chain runs to 90 residues: DNA-binding protein HU-beta (90 aa).

Belongs to the bacterial histone-like protein family. In terms of assembly, heterodimer of an alpha and a beta chain.

Its function is as follows. Histone-like DNA-binding protein which is capable of wrapping DNA to stabilize it, and thus to prevent its denaturation under extreme environmental conditions. The chain is DNA-binding protein HU-beta (hupB) from Escherichia coli O6:H1 (strain CFT073 / ATCC 700928 / UPEC).